The chain runs to 194 residues: 5'-deoxynucleotidase PBPRA2627 (194 aa).

Substrate is bound by residues 18–19 and H33; that span reads RW. In terms of domain architecture, HD spans 30-142; it reads ISEHSLQVAF…VKQADSLCAY (113 aa). A divalent metal cation-binding residues include H33, H68, and D69. Residues D69, 77 to 80, and D137 each bind substrate; that span reads DMPT. D137 serves as a coordination point for a divalent metal cation.

The protein belongs to the 5DNU family. As to quaternary structure, homodimer. A divalent metal cation is required as a cofactor.

It localises to the cytoplasm. It catalyses the reaction a 2'-deoxyribonucleoside 5'-phosphate + H2O = a 2'-deoxyribonucleoside + phosphate. Functionally, catalyzes the strictly specific dephosphorylation of 2'-deoxyribonucleoside 5'-monophosphates. This chain is 5'-deoxynucleotidase PBPRA2627, found in Photobacterium profundum (strain SS9).